The sequence spans 434 residues: 3-phosphoshikimate 1-carboxyvinyltransferase (434 aa).

Residues lysine 22, serine 23, and arginine 27 each contribute to the 3-phosphoshikimate site. Lysine 22 serves as a coordination point for phosphoenolpyruvate. Residues glycine 93 and arginine 121 each contribute to the phosphoenolpyruvate site. Positions 168, 169, 170, 199, 320, and 347 each coordinate 3-phosphoshikimate. Residue glutamine 170 participates in phosphoenolpyruvate binding. The active-site Proton acceptor is aspartate 320. Residues arginine 351, arginine 395, and lysine 420 each contribute to the phosphoenolpyruvate site.

Belongs to the EPSP synthase family. In terms of assembly, monomer.

It localises to the cytoplasm. It carries out the reaction 3-phosphoshikimate + phosphoenolpyruvate = 5-O-(1-carboxyvinyl)-3-phosphoshikimate + phosphate. It participates in metabolic intermediate biosynthesis; chorismate biosynthesis; chorismate from D-erythrose 4-phosphate and phosphoenolpyruvate: step 6/7. Catalyzes the transfer of the enolpyruvyl moiety of phosphoenolpyruvate (PEP) to the 5-hydroxyl of shikimate-3-phosphate (S3P) to produce enolpyruvyl shikimate-3-phosphate and inorganic phosphate. The protein is 3-phosphoshikimate 1-carboxyvinyltransferase of Cupriavidus taiwanensis (strain DSM 17343 / BCRC 17206 / CCUG 44338 / CIP 107171 / LMG 19424 / R1) (Ralstonia taiwanensis (strain LMG 19424)).